Here is a 285-residue protein sequence, read N- to C-terminus: Integrin alpha-1 (285 aa).

Residues Glu-1 to Gly-285 lie on the Extracellular side of the membrane. Residues Asn-2, Asn-40, Asn-208, and Asn-232 are each glycosylated (N-linked (GlcNAc...) asparagine). The region spanning Ile-66–Gln-279 is the VWFA domain.

This sequence belongs to the integrin alpha chain family. As to quaternary structure, heterodimer of an alpha and a beta subunit. Alpha-1 associates with beta-1.

It localises to the membrane. Its function is as follows. Integrin alpha-1/beta-1 is a receptor for laminin and collagen. It recognizes the proline-hydroxylated sequence G-F-P-G-E-R in collagen. Involved in anchorage-dependent, negative regulation of EGF-stimulated cell growth. The chain is Integrin alpha-1 (ITGA1) from Gallus gallus (Chicken).